A 340-amino-acid polypeptide reads, in one-letter code: Lipoyl synthase (340 aa).

Cysteine 83, cysteine 88, cysteine 94, cysteine 109, cysteine 113, cysteine 116, and serine 323 together coordinate [4Fe-4S] cluster. Residues 95 to 312 (FSGGTATFMI…AEEGYKMGFK (218 aa)) form the Radical SAM core domain.

Belongs to the radical SAM superfamily. Lipoyl synthase family. [4Fe-4S] cluster serves as cofactor.

Its subcellular location is the cytoplasm. The enzyme catalyses [[Fe-S] cluster scaffold protein carrying a second [4Fe-4S](2+) cluster] + N(6)-octanoyl-L-lysyl-[protein] + 2 oxidized [2Fe-2S]-[ferredoxin] + 2 S-adenosyl-L-methionine + 4 H(+) = [[Fe-S] cluster scaffold protein] + N(6)-[(R)-dihydrolipoyl]-L-lysyl-[protein] + 4 Fe(3+) + 2 hydrogen sulfide + 2 5'-deoxyadenosine + 2 L-methionine + 2 reduced [2Fe-2S]-[ferredoxin]. The protein operates within protein modification; protein lipoylation via endogenous pathway; protein N(6)-(lipoyl)lysine from octanoyl-[acyl-carrier-protein]: step 2/2. Its function is as follows. Catalyzes the radical-mediated insertion of two sulfur atoms into the C-6 and C-8 positions of the octanoyl moiety bound to the lipoyl domains of lipoate-dependent enzymes, thereby converting the octanoylated domains into lipoylated derivatives. The protein is Lipoyl synthase of Pseudomonas fluorescens (strain Pf0-1).